A 183-amino-acid chain; its full sequence is ATP synthase subunit delta (183 aa).

Belongs to the ATPase delta chain family. F-type ATPases have 2 components, F(1) - the catalytic core - and F(0) - the membrane proton channel. F(1) has five subunits: alpha(3), beta(3), gamma(1), delta(1), epsilon(1). F(0) has three main subunits: a(1), b(2) and c(10-14). The alpha and beta chains form an alternating ring which encloses part of the gamma chain. F(1) is attached to F(0) by a central stalk formed by the gamma and epsilon chains, while a peripheral stalk is formed by the delta and b chains.

The protein resides in the cell inner membrane. Its function is as follows. F(1)F(0) ATP synthase produces ATP from ADP in the presence of a proton or sodium gradient. F-type ATPases consist of two structural domains, F(1) containing the extramembraneous catalytic core and F(0) containing the membrane proton channel, linked together by a central stalk and a peripheral stalk. During catalysis, ATP synthesis in the catalytic domain of F(1) is coupled via a rotary mechanism of the central stalk subunits to proton translocation. In terms of biological role, this protein is part of the stalk that links CF(0) to CF(1). It either transmits conformational changes from CF(0) to CF(1) or is implicated in proton conduction. The polypeptide is ATP synthase subunit delta (Nitratidesulfovibrio vulgaris (strain DSM 19637 / Miyazaki F) (Desulfovibrio vulgaris)).